The following is a 172-amino-acid chain: Small ribosomal subunit protein uS5 (172 aa).

The 64-residue stretch at 17–80 folds into the S5 DRBM domain; the sequence is LREKMIAINR…EEARRNLAKI (64 aa).

It belongs to the universal ribosomal protein uS5 family. In terms of assembly, part of the 30S ribosomal subunit. Contacts proteins S4 and S8.

Functionally, with S4 and S12 plays an important role in translational accuracy. Located at the back of the 30S subunit body where it stabilizes the conformation of the head with respect to the body. The chain is Small ribosomal subunit protein uS5 from Variovorax paradoxus (strain S110).